The following is a 388-amino-acid chain: Succinate--CoA ligase [ADP-forming] subunit beta (388 aa).

Positions Lys-9–His-244 constitute an ATP-grasp domain. ATP contacts are provided by residues Lys-46, Gly-53 to Gly-55, Glu-99, Thr-102, and Glu-107. Asn-199 and Asp-213 together coordinate Mg(2+). Substrate contacts are provided by residues Asn-264 and Gly-321–Val-323.

The protein belongs to the succinate/malate CoA ligase beta subunit family. Heterotetramer of two alpha and two beta subunits. Mg(2+) serves as cofactor.

It catalyses the reaction succinate + ATP + CoA = succinyl-CoA + ADP + phosphate. The catalysed reaction is GTP + succinate + CoA = succinyl-CoA + GDP + phosphate. The protein operates within carbohydrate metabolism; tricarboxylic acid cycle; succinate from succinyl-CoA (ligase route): step 1/1. Succinyl-CoA synthetase functions in the citric acid cycle (TCA), coupling the hydrolysis of succinyl-CoA to the synthesis of either ATP or GTP and thus represents the only step of substrate-level phosphorylation in the TCA. The beta subunit provides nucleotide specificity of the enzyme and binds the substrate succinate, while the binding sites for coenzyme A and phosphate are found in the alpha subunit. In Shewanella sp. (strain ANA-3), this protein is Succinate--CoA ligase [ADP-forming] subunit beta.